Reading from the N-terminus, the 471-residue chain is V-type ATP synthase beta chain (471 aa).

The protein belongs to the ATPase alpha/beta chains family.

Functionally, produces ATP from ADP in the presence of a proton gradient across the membrane. The V-type beta chain is a regulatory subunit. In Streptococcus pyogenes serotype M12 (strain MGAS2096), this protein is V-type ATP synthase beta chain.